The following is a 27-amino-acid chain: M-ectatotoxin-Eb2a (27 aa).

Expressed by the venom gland.

It is found in the secreted. Antimicrobial peptide forming an alpha-helix in watery and membraneous environments, enabling it to perforate membranes. Active against Gram-negative bacteria E.coli DH5alpha (MIC=5 uM), E.coli MH1 (MIC=0.6 uM) and P.aeruginosa PAO1 (MIC=10 uM) and against Gram-positive bacteria B.subtilis VKM B-501 (MIC=0.6 uM) and A.globiformis VKM Ac-1112 (MIC=0.2 uM). Has cytolytic and hemolytic activity. This is M-ectatotoxin-Eb2a from Ectatomma brunneum (Ant).